The primary structure comprises 393 residues: METFLFTSESVNEGHPDKLCDQISDAVLDACLEQDQDSKVACETCTKTNMVMVFGEITTKAAVDYEKIVRDTCRTIGFVSDDVGLDADNCKVLVNIEQQSPDIAQGVHGHLTKRPEEIGAGDQGHMFGYATDETSELMPLSHVLATKLGARLTEVRKNGTCPWLRPDGKTQVTVEYYNEKGATVPIRVHTLLISTQHDETVTNDEIAADLKEHVIKPVIPDKYLDEKTIFHLNPSGRFVIGGPHGDAGLTGRKIIIDTYGGWGAHGGGAFSGKDPTKVDRSGAYIVRQAAKSIVANGLARRCIVQVSYAIGVPEPLSVFVDTYGTGKIPDKEILKIVKESFDFRPGMIAINLDLKRGGNSRFLKTAAYGHFGRDDPDFTWESGEAPQVGQTSS.

Glu-9 serves as a coordination point for Mg(2+). His-15 lines the ATP pocket. Glu-43 contributes to the K(+) binding site. L-methionine is bound by residues Glu-56 and Gln-99. Residues 167 to 169 (DGK), 235 to 238 (SGRF), Asp-246, 252 to 253 (RK), Ala-269, Lys-273, and Lys-277 contribute to the ATP site. An L-methionine-binding site is contributed by Asp-246. Lys-277 provides a ligand contact to L-methionine.

It belongs to the AdoMet synthase family. As to quaternary structure, homotetramer. The cofactor is Mn(2+). Mg(2+) serves as cofactor. Requires Co(2+) as cofactor. K(+) is required as a cofactor.

It is found in the cytoplasm. It catalyses the reaction L-methionine + ATP + H2O = S-adenosyl-L-methionine + phosphate + diphosphate. Its pathway is amino-acid biosynthesis; S-adenosyl-L-methionine biosynthesis; S-adenosyl-L-methionine from L-methionine: step 1/1. Catalyzes the formation of S-adenosylmethionine from methionine and ATP. The reaction comprises two steps that are both catalyzed by the same enzyme: formation of S-adenosylmethionine (AdoMet) and triphosphate, and subsequent hydrolysis of the triphosphate. The polypeptide is S-adenosylmethionine synthase (SAM) (Camellia sinensis (Tea plant)).